Here is a 165-residue protein sequence, read N- to C-terminus: Thiol peroxidase (165 aa).

One can recognise a Thioredoxin domain in the interval 18–165; sequence PQKGAQAPAF…PNYAAALAAL (148 aa). Cys60 (cysteine sulfenic acid (-SOH) intermediate) is an active-site residue. Residues Cys60 and Cys94 are joined by a disulfide bond.

The protein belongs to the peroxiredoxin family. Tpx subfamily. In terms of assembly, homodimer.

It carries out the reaction a hydroperoxide + [thioredoxin]-dithiol = an alcohol + [thioredoxin]-disulfide + H2O. In terms of biological role, thiol-specific peroxidase that catalyzes the reduction of hydrogen peroxide and organic hydroperoxides to water and alcohols, respectively. Plays a role in cell protection against oxidative stress by detoxifying peroxides. In Pseudomonas aeruginosa (strain ATCC 15692 / DSM 22644 / CIP 104116 / JCM 14847 / LMG 12228 / 1C / PRS 101 / PAO1), this protein is Thiol peroxidase.